A 283-amino-acid polypeptide reads, in one-letter code: UPF0273 protein STK_18300 (283 aa).

A KaiC domain is found at 4–249 (LRVRTYIPGF…YLRITNVKAE (246 aa)). Position 31–38 (31–38 (GGPGTGKS)) interacts with ATP. The segment at 261–283 (MKKAVEESEEEKESIQEAEIEEE) is disordered. The span at 267 to 283 (ESEEEKESIQEAEIEEE) shows a compositional bias: acidic residues.

It belongs to the UPF0273 family.

This Sulfurisphaera tokodaii (strain DSM 16993 / JCM 10545 / NBRC 100140 / 7) (Sulfolobus tokodaii) protein is UPF0273 protein STK_18300.